A 535-amino-acid polypeptide reads, in one-letter code: UDP-N-acetylmuramoyl-L-alanyl-D-glutamate--2,6-diaminopimelate ligase (535 aa).

Position 67 (Leu67) interacts with UDP-N-acetyl-alpha-D-muramoyl-L-alanyl-D-glutamate. An ATP-binding site is contributed by 153–159 (GTSGKTT). Residues 195–196 (TT), Ser222, and Arg230 contribute to the UDP-N-acetyl-alpha-D-muramoyl-L-alanyl-D-glutamate site. At Lys262 the chain carries N6-carboxylysine. Meso-2,6-diaminopimelate contacts are provided by residues Arg424, 448 to 451 (DNPR), Gly502, and Glu506. The Meso-diaminopimelate recognition motif motif lies at 448 to 451 (DNPR).

This sequence belongs to the MurCDEF family. MurE subfamily. It depends on Mg(2+) as a cofactor. Post-translationally, carboxylation is probably crucial for Mg(2+) binding and, consequently, for the gamma-phosphate positioning of ATP.

It is found in the cytoplasm. The catalysed reaction is UDP-N-acetyl-alpha-D-muramoyl-L-alanyl-D-glutamate + meso-2,6-diaminopimelate + ATP = UDP-N-acetyl-alpha-D-muramoyl-L-alanyl-gamma-D-glutamyl-meso-2,6-diaminopimelate + ADP + phosphate + H(+). It participates in cell wall biogenesis; peptidoglycan biosynthesis. Its function is as follows. Catalyzes the addition of meso-diaminopimelic acid to the nucleotide precursor UDP-N-acetylmuramoyl-L-alanyl-D-glutamate (UMAG) in the biosynthesis of bacterial cell-wall peptidoglycan. The protein is UDP-N-acetylmuramoyl-L-alanyl-D-glutamate--2,6-diaminopimelate ligase of Mycobacterium bovis (strain ATCC BAA-935 / AF2122/97).